A 259-amino-acid chain; its full sequence is Diphthine synthase (259 aa).

S-adenosyl-L-methionine contacts are provided by residues L9, D85, V88, 113-114, L168, A209, and H234; that span reads TA.

This sequence belongs to the diphthine synthase family. In terms of assembly, homodimer.

It carries out the reaction 2-[(3S)-amino-3-carboxypropyl]-L-histidyl-[translation elongation factor 2] + 3 S-adenosyl-L-methionine = diphthine-[translation elongation factor 2] + 3 S-adenosyl-L-homocysteine + 3 H(+). It participates in protein modification; peptidyl-diphthamide biosynthesis. S-adenosyl-L-methionine-dependent methyltransferase that catalyzes the trimethylation of the amino group of the modified target histidine residue in translation elongation factor 2 (EF-2), to form an intermediate called diphthine. The three successive methylation reactions represent the second step of diphthamide biosynthesis. In Haloarcula marismortui (strain ATCC 43049 / DSM 3752 / JCM 8966 / VKM B-1809) (Halobacterium marismortui), this protein is Diphthine synthase.